The primary structure comprises 193 residues: Ion-translocating oxidoreductase complex subunit A (193 aa).

6 helical membrane passes run 5 to 25 (LMLL…FLGL), 39 to 59 (IGMG…TWLI), 62 to 82 (FLLV…LVIA), 102 to 122 (VLGI…VALL), 134 to 154 (VLYG…FAGL), and 170 to 190 (APIS…FAGL).

This sequence belongs to the NqrDE/RnfAE family. In terms of assembly, the complex is composed of six subunits: RnfA, RnfB, RnfC, RnfD, RnfE and RnfG.

It localises to the cell inner membrane. Functionally, part of a membrane-bound complex that couples electron transfer with translocation of ions across the membrane. The protein is Ion-translocating oxidoreductase complex subunit A of Azoarcus sp. (strain BH72).